We begin with the raw amino-acid sequence, 338 residues long: tRNA-specific 2-thiouridylase MnmA (338 aa).

Residues 6-13 and M32 contribute to the ATP site; that span reads AMSGGVDS. C92 functions as the Nucleophile in the catalytic mechanism. The cysteines at positions 92 and 186 are disulfide-linked. Residue G116 participates in ATP binding. An interaction with tRNA region spans residues 134–136; the sequence is KDQ. Catalysis depends on C186, which acts as the Cysteine persulfide intermediate. An interaction with tRNA region spans residues 288–289; sequence RY.

It belongs to the MnmA/TRMU family.

Its subcellular location is the cytoplasm. The enzyme catalyses S-sulfanyl-L-cysteinyl-[protein] + uridine(34) in tRNA + AH2 + ATP = 2-thiouridine(34) in tRNA + L-cysteinyl-[protein] + A + AMP + diphosphate + H(+). Functionally, catalyzes the 2-thiolation of uridine at the wobble position (U34) of tRNA, leading to the formation of s(2)U34. The protein is tRNA-specific 2-thiouridylase MnmA of Campylobacter jejuni subsp. jejuni serotype O:2 (strain ATCC 700819 / NCTC 11168).